We begin with the raw amino-acid sequence, 234 residues long: Large ribosomal subunit protein uL1 (234 aa).

The protein belongs to the universal ribosomal protein uL1 family. In terms of assembly, part of the 50S ribosomal subunit.

Its function is as follows. Binds directly to 23S rRNA. The L1 stalk is quite mobile in the ribosome, and is involved in E site tRNA release. Functionally, protein L1 is also a translational repressor protein, it controls the translation of the L11 operon by binding to its mRNA. This Aliivibrio fischeri (strain MJ11) (Vibrio fischeri) protein is Large ribosomal subunit protein uL1.